We begin with the raw amino-acid sequence, 185 residues long: Shikimate kinase (185 aa).

15–20 (GAGKST) serves as a coordination point for ATP. Residue Ser19 coordinates Mg(2+). Substrate-binding residues include Asp37, Arg61, and Gly83. Residue Arg121 coordinates ATP. Arg146 contacts substrate.

This sequence belongs to the shikimate kinase family. In terms of assembly, monomer. It depends on Mg(2+) as a cofactor.

The protein resides in the cytoplasm. The catalysed reaction is shikimate + ATP = 3-phosphoshikimate + ADP + H(+). The protein operates within metabolic intermediate biosynthesis; chorismate biosynthesis; chorismate from D-erythrose 4-phosphate and phosphoenolpyruvate: step 5/7. Its function is as follows. Catalyzes the specific phosphorylation of the 3-hydroxyl group of shikimic acid using ATP as a cosubstrate. In Blochmanniella floridana, this protein is Shikimate kinase.